Reading from the N-terminus, the 566-residue chain is Solute carrier family 22 member 16 (566 aa).

A helical transmembrane segment spans residues 20-40 (FASAFQTISCGIHYLASVFIA). N-linked (GlcNAc...) asparagine glycosylation is found at asparagine 52, asparagine 60, and asparagine 112. The next 5 membrane-spanning stretches (helical) occupy residues 149-169 (LIQP…GDIA), 176-196 (PIIW…AFTF), 201-221 (FVIV…VVFV), 237-257 (MHVH…GFLV), and 261-281 (WIYQ…CWML). A glycan (N-linked (GlcNAc...) asparagine) is linked at asparagine 344. Transmembrane regions (helical) follow at residues 351–371 (TITV…FALN), 381–401 (LNLF…CLGM), 408–428 (NTLA…MLIP), 436–456 (IAMS…IYLY), 468–488 (LAVG…PFCV), and 493–513 (VWIF…GILT).

The protein belongs to the major facilitator (TC 2.A.1) superfamily. Organic cation transporter (TC 2.A.1.19) family.

The protein resides in the membrane. Functionally, high affinity carnitine transporter. The protein is Solute carrier family 22 member 16 (slc22a16) of Xenopus laevis (African clawed frog).